Consider the following 349-residue polypeptide: Hydroxymethylglutaryl-CoA synthase (349 aa).

Residues aspartate 30 and alanine 31 each contribute to the (3S)-3-hydroxy-3-methylglutaryl-CoA site. Glutamate 82 functions as the Proton donor/acceptor in the catalytic mechanism. (3S)-3-hydroxy-3-methylglutaryl-CoA-binding residues include cysteine 114 and threonine 155. Cysteine 114 serves as the catalytic Acyl-thioester intermediate. Arginine 203 serves as a coordination point for CoA. (3S)-3-hydroxy-3-methylglutaryl-CoA contacts are provided by threonine 205 and histidine 238. Histidine 238 functions as the Proton donor/acceptor in the catalytic mechanism. Lysine 243 contributes to the CoA binding site. (3S)-3-hydroxy-3-methylglutaryl-CoA-binding residues include asparagine 270 and serine 300.

This sequence belongs to the thiolase-like superfamily. Archaeal HMG-CoA synthase family. As to quaternary structure, interacts with acetoacetyl-CoA thiolase that catalyzes the precedent step in the pathway and with a DUF35 protein. The acetoacetyl-CoA thiolase/HMG-CoA synthase complex channels the intermediate via a fused CoA-binding site, which allows for efficient coupling of the endergonic thiolase reaction with the exergonic HMGCS reaction.

The catalysed reaction is acetoacetyl-CoA + acetyl-CoA + H2O = (3S)-3-hydroxy-3-methylglutaryl-CoA + CoA + H(+). The protein operates within metabolic intermediate biosynthesis; (R)-mevalonate biosynthesis; (R)-mevalonate from acetyl-CoA: step 2/3. Functionally, catalyzes the condensation of acetyl-CoA with acetoacetyl-CoA to form 3-hydroxy-3-methylglutaryl-CoA (HMG-CoA). Functions in the mevalonate (MVA) pathway leading to isopentenyl diphosphate (IPP), a key precursor for the biosynthesis of isoprenoid compounds that are building blocks of archaeal membrane lipids. This chain is Hydroxymethylglutaryl-CoA synthase, found in Methanococcus maripaludis (strain DSM 14266 / JCM 13030 / NBRC 101832 / S2 / LL).